Here is a 65-residue protein sequence, read N- to C-terminus: Large ribosomal subunit protein bL35 (65 aa).

The segment at 1-21 (MPKMKTKSGAAKRFTVRAGGT) is disordered.

Belongs to the bacterial ribosomal protein bL35 family.

The chain is Large ribosomal subunit protein bL35 from Nitrosospira multiformis (strain ATCC 25196 / NCIMB 11849 / C 71).